The chain runs to 555 residues: Synaptotagmin-14 (555 aa).

Over 1-24 (MAIEGGERTCGVHELICIRKVSPE) the chain is Extracellular. A helical; Signal-anchor for type III membrane protein transmembrane segment spans residues 25–47 (AVGFLSAVGVFIVLMLLLFLYIN). At 48-555 (KKFCFENVGG…VCRWHALLES (508 aa)) the chain is on the cytoplasmic side. Disordered regions lie at residues 76–97 (YNSY…EALG), 157–179 (TPPL…HLSC), and 205–258 (CPSE…PEPE). Positions 211–224 (TGHEAESYHNKGYE) are enriched in basic and acidic residues. C2 domains lie at 260 to 379 (KYGT…SLPV) and 415 to 550 (SVPE…CRWH).

The protein belongs to the synaptotagmin family. As to quaternary structure, homodimer. Can also form heterodimers. As to expression, expressed in heart and testis. Expressed in brain (especially in the cerebellum).

It localises to the membrane. May be involved in the trafficking and exocytosis of secretory vesicles in non-neuronal tissues. Is Ca(2+)-independent. In Mus musculus (Mouse), this protein is Synaptotagmin-14 (Syt14).